The chain runs to 481 residues: Dual specificity protein kinase CLK4 (481 aa).

2 disordered regions span residues 1–47 and 102–143; these read MRHS…KPHH and SKSS…EDDE. Positions 8–19 are enriched in basic and acidic residues; that stretch reads HCPDWDSRESWG. Basic residues-rich tracts occupy residues 106-119 and 126-136; these read VRSR…KRNR and SHSKSHRRKRS. Phosphoserine occurs at positions 136 and 138. A Protein kinase domain is found at 159–475; sequence YEIVDTLGEG…LDEALQHPFF (317 aa). ATP contacts are provided by residues 165 to 173 and lysine 189; that span reads LGEGAFGKV. The active-site Proton acceptor is the aspartate 286.

This sequence belongs to the protein kinase superfamily. CMGC Ser/Thr protein kinase family. Lammer subfamily. Interacts with UBL5. Post-translationally, autophosphorylates on all three types of residues. Expressed in the hippocampus, the cerebellum and the olfactory bulb.

It localises to the nucleus. The catalysed reaction is L-seryl-[protein] + ATP = O-phospho-L-seryl-[protein] + ADP + H(+). It catalyses the reaction L-threonyl-[protein] + ATP = O-phospho-L-threonyl-[protein] + ADP + H(+). It carries out the reaction L-tyrosyl-[protein] + ATP = O-phospho-L-tyrosyl-[protein] + ADP + H(+). Its activity is regulated as follows. TG003 inhibits its kinase activity and affects the regulation of alternative splicing mediated by phosphorylation of SR proteins. In terms of biological role, dual specificity kinase acting on both serine/threonine and tyrosine-containing substrates. Phosphorylates serine- and arginine-rich (SR) proteins of the spliceosomal complex and may be a constituent of a network of regulatory mechanisms that enable SR proteins to control RNA splicing. Phosphorylates SRSF1 and SRSF3. Required for the regulation of alternative splicing of MAPT/TAU. Regulates the alternative splicing of tissue factor (F3) pre-mRNA in endothelial cells. The polypeptide is Dual specificity protein kinase CLK4 (Clk4) (Mus musculus (Mouse)).